The following is a 713-amino-acid chain: P-loop NTPase domain-containing protein LPA1 homolog (713 aa).

3 disordered regions span residues 218 to 249 (AKKR…PIGK), 504 to 575 (TSQA…EDLS), and 650 to 713 (LDSP…APDK). The segment covering 231–246 (DFDKTRPLNDKPDGKP) has biased composition (basic and acidic residues). Over residues 504-531 (TSQAGSVNESWDNANEGTGSHVPSSSGS) the composition is skewed to polar residues. The segment covering 533-544 (KKLDGHCKEIKE) has biased composition (basic and acidic residues). Residues 551 to 562 (SDDDEEEEEEAA) are compositionally biased toward acidic residues. The segment covering 656–668 (ARSSSALPISASS) has biased composition (low complexity).

Its function is as follows. Required for the accumulation of phytic acid in seeds. Phytic acid is the primary storage form of phosphorus in cereal grains and other plant seeds. This chain is P-loop NTPase domain-containing protein LPA1 homolog, found in Oryza sativa subsp. japonica (Rice).